Reading from the N-terminus, the 804-residue chain is Phenylalanine--tRNA ligase beta subunit (804 aa).

One can recognise a tRNA-binding domain in the interval 39–155; the sequence is EEGLKKLVVG…ADVKPGQDVY (117 aa). One can recognise a B5 domain in the interval 408 to 483; sequence REPVVVKTTV…RIYGYDNLKS (76 aa). 4 residues coordinate Mg(2+): D461, D467, E470, and E471. The 94-residue stretch at 711-804 folds into the FDX-ACB domain; that stretch reads PKFPAIERDL…LENDLDIKVR (94 aa).

It belongs to the phenylalanyl-tRNA synthetase beta subunit family. Type 1 subfamily. As to quaternary structure, tetramer of two alpha and two beta subunits. Mg(2+) serves as cofactor.

It localises to the cytoplasm. The enzyme catalyses tRNA(Phe) + L-phenylalanine + ATP = L-phenylalanyl-tRNA(Phe) + AMP + diphosphate + H(+). This chain is Phenylalanine--tRNA ligase beta subunit, found in Lactobacillus acidophilus (strain ATCC 700396 / NCK56 / N2 / NCFM).